Consider the following 86-residue polypeptide: Small ribosomal subunit protein bS18 (86 aa).

The protein belongs to the bacterial ribosomal protein bS18 family. As to quaternary structure, part of the 30S ribosomal subunit. Forms a tight heterodimer with protein bS6.

Functionally, binds as a heterodimer with protein bS6 to the central domain of the 16S rRNA, where it helps stabilize the platform of the 30S subunit. This is Small ribosomal subunit protein bS18 from Campylobacter curvus (strain 525.92).